A 141-amino-acid polypeptide reads, in one-letter code: VLSSKDKANIKTAFGKIGGHAADYGAEALERMFLGFPTTKTYFPHFDLSHGSAQVKAHGKKVGDALTKAADHLDDLPSALSALSDLHAHKLRVDPVNFKLLSHCLLVTVAAHHPGDFTPAVHASLDKFLANVSTVLTSKYR.

The region spanning 1–141 is the Globin domain; sequence VLSSKDKANI…VSTVLTSKYR (141 aa). Position 3 is a phosphoserine (Ser-3). Lys-7 and Lys-11 each carry N6-succinyllysine. At Lys-16 the chain carries N6-acetyllysine; alternate. Lys-16 carries the post-translational modification N6-succinyllysine; alternate. Phosphotyrosine is present on Tyr-24. N6-succinyllysine is present on Lys-40. Ser-49 is modified (phosphoserine). An O2-binding site is contributed by His-58. His-87 provides a ligand contact to heme b. Position 102 is a phosphoserine (Ser-102). The residue at position 108 (Thr-108) is a Phosphothreonine. A Phosphoserine modification is found at Ser-124. Phosphothreonine is present on residues Thr-134 and Thr-137. Ser-138 bears the Phosphoserine mark.

The protein belongs to the globin family. As to quaternary structure, heterotetramer of two alpha chains and two beta chains. In terms of tissue distribution, red blood cells.

Functionally, involved in oxygen transport from the lung to the various peripheral tissues. In terms of biological role, hemopressin acts as an antagonist peptide of the cannabinoid receptor CNR1. Hemopressin-binding efficiently blocks cannabinoid receptor CNR1 and subsequent signaling. The protein is Hemoglobin subunit alpha (HBA) of Vicugna pacos (Alpaca).